We begin with the raw amino-acid sequence, 325 residues long: Post-GPI attachment to proteins factor 2-like (325 aa).

The next 6 membrane-spanning stretches (helical) occupy residues 80-100 (VVTALLPLVTLFTCFVTAYVF), 130-150 (YFWRFSIALHIGPRIPIAFVY), 171-191 (LLITLILVLNCIEIASLGGVT), 205-225 (IFITFMVCSLCYMLATIKLNG), 243-263 (WKKILFAVSILSTVGLLVFFA), and 276-296 (WFAFFEYLIAIANMLFHFTII).

Belongs to the PGAP2 family.

It is found in the membrane. The polypeptide is Post-GPI attachment to proteins factor 2-like (Drosophila melanogaster (Fruit fly)).